A 505-amino-acid chain; its full sequence is Cyanidin 3-O-glucoside 7-O-glucosyltransferase (acyl-glucose) (505 aa).

Residues 1-25 (MCPSFLVTLLLLQLSSLVVVLVVWA) form the signal peptide. Residues Q52, H152, and 197 to 198 (NE) contribute to the a beta-D-glucoside site. E198 acts as the Proton donor in catalysis. C217 and C225 are joined by a disulfide. N224, N229, and N324 each carry an N-linked (GlcNAc...) asparagine glycan. 2 residues coordinate a beta-D-glucoside: Y341 and E403. Residue E403 is the Nucleophile of the active site. N411 and N437 each carry an N-linked (GlcNAc...) asparagine glycan. W447 and Y463 together coordinate a beta-D-glucoside. N494 carries an N-linked (GlcNAc...) asparagine glycan.

Belongs to the glycosyl hydrolase 1 family.

It is found in the vacuole. The enzyme catalyses 1-O-(4-hydroxy-3-methoxybenzoyl)-beta-D-glucose + cyanidin 3-O-beta-D-glucoside = cyanidin 3,7-di-O-beta-D-glucoside + vanillate. The protein operates within pigment biosynthesis; anthocyanin biosynthesis. Functionally, beta-glycosidase that catalyzes the transfer of glucose moiety to anthocyanidin 3-glucoside at the 7 position. Anthocyanins are ubiquitous colored pigments that are responsible for variations in petal color. The polypeptide is Cyanidin 3-O-glucoside 7-O-glucosyltransferase (acyl-glucose) (AA7GT) (Delphinium grandiflorum (Siberian larkspur)).